The following is a 658-amino-acid chain: Glycogen debranching enzyme (658 aa).

Aspartate 336 (nucleophile) is an active-site residue. The Proton donor role is filled by glutamate 371.

It belongs to the glycosyl hydrolase 13 family.

The catalysed reaction is Hydrolysis of (1-&gt;6)-alpha-D-glucosidic linkages to branches with degrees of polymerization of three or four glucose residues in limit dextrin.. The protein operates within glycan degradation; glycogen degradation. Removes maltotriose and maltotetraose chains that are attached by 1,6-alpha-linkage to the limit dextrin main chain, generating a debranched limit dextrin. The polypeptide is Glycogen debranching enzyme (Klebsiella pneumoniae (strain 342)).